A 393-amino-acid polypeptide reads, in one-letter code: Formate-dependent phosphoribosylglycinamide formyltransferase (393 aa).

Residues Glu22–Leu23 and Glu82 each bind N(1)-(5-phospho-beta-D-ribosyl)glycinamide. ATP contacts are provided by residues Arg114, Lys155, Ser160–Gln165, Glu195–Val198, and Glu203. The ATP-grasp domain occupies Arg119–Leu308. Positions 267 and 279 each coordinate Mg(2+). N(1)-(5-phospho-beta-D-ribosyl)glycinamide contacts are provided by residues Asp286, Lys356, and Arg363–Arg364.

It belongs to the PurK/PurT family. In terms of assembly, homodimer.

The catalysed reaction is N(1)-(5-phospho-beta-D-ribosyl)glycinamide + formate + ATP = N(2)-formyl-N(1)-(5-phospho-beta-D-ribosyl)glycinamide + ADP + phosphate + H(+). It participates in purine metabolism; IMP biosynthesis via de novo pathway; N(2)-formyl-N(1)-(5-phospho-D-ribosyl)glycinamide from N(1)-(5-phospho-D-ribosyl)glycinamide (formate route): step 1/1. Functionally, involved in the de novo purine biosynthesis. Catalyzes the transfer of formate to 5-phospho-ribosyl-glycinamide (GAR), producing 5-phospho-ribosyl-N-formylglycinamide (FGAR). Formate is provided by PurU via hydrolysis of 10-formyl-tetrahydrofolate. This Nitratidesulfovibrio vulgaris (strain DSM 19637 / Miyazaki F) (Desulfovibrio vulgaris) protein is Formate-dependent phosphoribosylglycinamide formyltransferase.